A 31-amino-acid chain; its full sequence is MPIILSYSGFLLAAPIPASAPFTGLNKIRLI.

Residues 7 to 25 (YSGFLLAAPIPASAPFTGL) form a helical membrane-spanning segment.

The protein belongs to the PetL family. In terms of assembly, the 4 large subunits of the cytochrome b6-f complex are cytochrome b6, subunit IV (17 kDa polypeptide, PetD), cytochrome f and the Rieske protein, while the 4 small subunits are PetG, PetL, PetM and PetN. The complex functions as a dimer.

The protein resides in the plastid. The protein localises to the chloroplast thylakoid membrane. Its function is as follows. Component of the cytochrome b6-f complex, which mediates electron transfer between photosystem II (PSII) and photosystem I (PSI), cyclic electron flow around PSI, and state transitions. PetL is important for photoautotrophic growth as well as for electron transfer efficiency and stability of the cytochrome b6-f complex. In Huperzia lucidula (Shining clubmoss), this protein is Cytochrome b6-f complex subunit 6.